A 123-amino-acid polypeptide reads, in one-letter code: Probable histone H2B 4 (123 aa).

Positions 1–30 (MPPKPSAKGAKKAAKTVVAKPKDGKKRRHA) are disordered. O-linked (GlcNAc) serine glycosylation occurs at Ser-110. Lys-118 participates in a covalent cross-link: Glycyl lysine isopeptide (Lys-Gly) (interchain with G-Cter in ubiquitin).

Belongs to the histone H2B family. As to quaternary structure, the nucleosome is a histone octamer containing two molecules each of H2A, H2B, H3 and H4 assembled in one H3-H4 heterotetramer and two H2A-H2B heterodimers. The octamer wraps approximately 147 bp of DNA. Post-translationally, monoubiquitination of Lys-118 gives a specific tag for epigenetic transcriptional activation and is also prerequisite for histone H3 'Lys-4' and 'Lys-79' methylation. GlcNAcylation at Ser-110 promotes monoubiquitination of Lys-118. It fluctuates in response to extracellular glucose, and associates with transcribed genes.

It localises to the nucleus. The protein resides in the chromosome. Functionally, core component of nucleosome. Nucleosomes wrap and compact DNA into chromatin, limiting DNA accessibility to the cellular machineries which require DNA as a template. Histones thereby play a central role in transcription regulation, DNA repair, DNA replication and chromosomal stability. DNA accessibility is regulated via a complex set of post-translational modifications of histones, also called histone code, and nucleosome remodeling. This chain is Probable histone H2B 4 (his-48), found in Caenorhabditis elegans.